Here is a 433-residue protein sequence, read N- to C-terminus: Steroid hormone receptor ERR2 (433 aa).

The interval 1 to 38 (MSSDDRHLGSSCGSFIKTEPSSPSSGIDALSHHSPSGS) is disordered. Residues 28-38 (DALSHHSPSGS) are compositionally biased toward low complexity. Residues 93–211 (YMLNAIPKRL…SPPAKKPLTK (119 aa)) form an interaction with NANOG region. The nuclear receptor DNA-binding region spans 100–186 (KRLCLVCGDI…RVRGGRQKYK (87 aa)). 2 consecutive NR C4-type zinc fingers follow at residues 103-123 (CLVCGDIASGYHYGVASCEAC) and 139-163 (CPATNECEITKRRRKSCQACRFMKC). The essential for ESRRB transcriptional activity and interaction with NCOA3 stretch occupies residues 203 to 433 (PPAKKPLTKI…LFLEMLEAKV (231 aa)). The NR LBD domain occupies 208–432 (PLTKIVSYLL…KLFLEMLEAK (225 aa)).

It belongs to the nuclear hormone receptor family. NR3 subfamily. Binds DNA as a monomer. Interacts with NR0B1; represses ESRRB activity at the GATA6 promoter. Interacts with NANOG; reciprocally modulates their transcriptional activities and activates POU5F1 expression. Interacts with NCOA3; mediates the interaction between ESRRB and RNA polymerase II complexes and allows NCOA3 corecruitment to ESRRB, KLF4, NANOG, and SOX2 enhancer regions to trigger ESRRB-dependent gene activation involved in self-renewal and pluripotency. Interacts with KDM1A; co-occupes the core set of ESRRB targets including ELF5 and EOMES. Interacts with the multiprotein complex Integrator, at least composed of INTS1, INTS2, INTS3, INTS4, INTS5, INTS6, INTS7, INTS8, INTS9/RC74, INTS10, INTS11/CPSF3L and INTS12; ESRRB is probably not a core component of the integrator complex and associates to integrator via its interaction with INTS1 and INTS9; attracts the transcriptional machinery. Interacts with JARID2. Interacts with POU5F1; recruits ESRRB near the POU5F1-SOX2 element in the NANOG proximal promoter leading to activation of NANOG expression; the interaction is DNA independent. Interacts with NFE2L2; represses NFE2L2 transcriptional activity. Isoform 1 interacts with ESR1. Post-translationally, acetylated by PCAF/KAT2 (in vitro).

It is found in the nucleus. Its subcellular location is the cytoplasm. The protein resides in the chromosome. Functionally, transcription factor that binds a canonical ESRRB recognition (ERRE) sequence 5'TCAAGGTCA-3' localized on promoter and enhancer of targets genes regulating their expression or their transcription activity. Plays a role, in a LIF-independent manner, in maintainance of self-renewal and pluripotency of embryonic and trophoblast stem cells through different signaling pathways including FGF signaling pathway and Wnt signaling pathways. Involved in morula development (2-16 cells embryos) by acting as a regulator at the 8-cell stage. Upon FGF signaling pathway activation, interacts with KDM1A by directly binding to enhancer site of ELF5 and EOMES and activating their transcription leading to self-renewal of trophoblast stem cells. Also regulates expression of multiple rod-specific genes and is required for survival of this cell type. Plays a role as transcription factor activator of GATA6, NR0B1, POU5F1 and PERM1. Plays a role as transcription factor repressor of NFE2L2 transcriptional activity and ESR1 transcriptional activity. During mitosis remains bound to a subset of interphase target genes, including pluripotency regulators, through the canonical ESRRB recognition (ERRE) sequence, leading to their transcriptional activation in early G1 phase. Can coassemble on structured DNA elements with other transcription factors like SOX2, POU5F1, KDM1A and NCOA3 to trigger ESRRB-dependent gene activation. This mechanism, in the case of SOX2 corecruitment prevents the embryonic stem cells (ESCs) to epiblast stem cells (EpiSC) transition through positive regulation of NR0B1 that inhibits the EpiSC transcriptional program. Also plays a role inner ear development by controlling expression of ion channels and transporters and in early placentation. Transcription factor that binds a canonical ESRRB recognition (ERRE) sequence 5'TCAAGGTCA-3' localized on promoter and enhancer of targets genes regulating their expression or their transcription activity. Positively regulates ESR1 transcriptional activity upon E2 stimulation. This chain is Steroid hormone receptor ERR2, found in Homo sapiens (Human).